Here is a 207-residue protein sequence, read N- to C-terminus: A-type ATP synthase subunit E (207 aa).

The protein belongs to the V-ATPase E subunit family. As to quaternary structure, has multiple subunits with at least A(3), B(3), C, D, E, F, H, I and proteolipid K(x).

Its subcellular location is the cell membrane. Component of the A-type ATP synthase that produces ATP from ADP in the presence of a proton gradient across the membrane. The protein is A-type ATP synthase subunit E of Hyperthermus butylicus (strain DSM 5456 / JCM 9403 / PLM1-5).